A 226-amino-acid chain; its full sequence is Uracil-DNA glycosylase (226 aa).

Catalysis depends on aspartate 64, which acts as the Proton acceptor.

This sequence belongs to the uracil-DNA glycosylase (UDG) superfamily. UNG family.

The protein localises to the cytoplasm. The catalysed reaction is Hydrolyzes single-stranded DNA or mismatched double-stranded DNA and polynucleotides, releasing free uracil.. Its function is as follows. Excises uracil residues from the DNA which can arise as a result of misincorporation of dUMP residues by DNA polymerase or due to deamination of cytosine. The chain is Uracil-DNA glycosylase from Fusobacterium nucleatum subsp. nucleatum (strain ATCC 25586 / DSM 15643 / BCRC 10681 / CIP 101130 / JCM 8532 / KCTC 2640 / LMG 13131 / VPI 4355).